The sequence spans 502 residues: Glucose-6-phosphate isomerase (502 aa).

Glu-331 acts as the Proton donor in catalysis. Active-site residues include His-362 and Lys-471.

The protein belongs to the GPI family.

Its subcellular location is the cytoplasm. It carries out the reaction alpha-D-glucose 6-phosphate = beta-D-fructose 6-phosphate. The protein operates within carbohydrate biosynthesis; gluconeogenesis. Its pathway is carbohydrate degradation; glycolysis; D-glyceraldehyde 3-phosphate and glycerone phosphate from D-glucose: step 2/4. In terms of biological role, catalyzes the reversible isomerization of glucose-6-phosphate to fructose-6-phosphate. The protein is Glucose-6-phosphate isomerase of Xylella fastidiosa (strain M12).